Here is a 399-residue protein sequence, read N- to C-terminus: Stearoyl-[acyl-carrier-protein] 9-desaturase, seed specific, chloroplastic (399 aa).

A chloroplast-targeting transit peptide spans 1 to 34; that stretch reads MALKFNPLVSQPYKLASSARPPVSTFRSPKFLCL. Positions 141, 179, 182, 232, 265, and 268 each coordinate Fe cation.

This sequence belongs to the fatty acid desaturase type 2 family. Homodimer. The cofactor is Fe(2+). Developing seeds.

The protein localises to the plastid. It localises to the chloroplast. The enzyme catalyses octadecanoyl-[ACP] + 2 reduced [2Fe-2S]-[ferredoxin] + O2 + 2 H(+) = (9Z)-octadecenoyl-[ACP] + 2 oxidized [2Fe-2S]-[ferredoxin] + 2 H2O. Its pathway is lipid metabolism; fatty acid metabolism. In terms of biological role, converts stearoyl-ACP to oleoyl-ACP by introduction of a cis double bond between carbons Delta(9) and Delta(10) of the acyl chain. This chain is Stearoyl-[acyl-carrier-protein] 9-desaturase, seed specific, chloroplastic, found in Brassica napus (Rape).